The sequence spans 330 residues: 4-hydroxythreonine-4-phosphate dehydrogenase (330 aa).

Positions 134 and 135 each coordinate substrate. A divalent metal cation is bound by residues His-164, His-209, and His-264. Residues Lys-272, Asn-281, and Arg-290 each coordinate substrate.

This sequence belongs to the PdxA family. In terms of assembly, homodimer. The cofactor is Zn(2+). Mg(2+) is required as a cofactor. Requires Co(2+) as cofactor.

It is found in the cytoplasm. The catalysed reaction is 4-(phosphooxy)-L-threonine + NAD(+) = 3-amino-2-oxopropyl phosphate + CO2 + NADH. The protein operates within cofactor biosynthesis; pyridoxine 5'-phosphate biosynthesis; pyridoxine 5'-phosphate from D-erythrose 4-phosphate: step 4/5. Catalyzes the NAD(P)-dependent oxidation of 4-(phosphooxy)-L-threonine (HTP) into 2-amino-3-oxo-4-(phosphooxy)butyric acid which spontaneously decarboxylates to form 3-amino-2-oxopropyl phosphate (AHAP). This is 4-hydroxythreonine-4-phosphate dehydrogenase from Pseudoalteromonas translucida (strain TAC 125).